The following is a 563-amino-acid chain: Arginine--tRNA ligase (563 aa).

The 'HIGH' region motif lies at 120–130 (PNIAKPFHVGH).

Belongs to the class-I aminoacyl-tRNA synthetase family. Monomer.

It is found in the cytoplasm. The catalysed reaction is tRNA(Arg) + L-arginine + ATP = L-arginyl-tRNA(Arg) + AMP + diphosphate. This is Arginine--tRNA ligase from Clostridium beijerinckii (strain ATCC 51743 / NCIMB 8052) (Clostridium acetobutylicum).